The primary structure comprises 134 residues: Fluoride-specific ion channel FluC 2 (134 aa).

Helical transmembrane passes span 1 to 21, 28 to 48, 68 to 88, and 92 to 112; these read MNYF…EITG, IFPV…LFFM, GFLG…LLLF, and LLIG…SGIL. Na(+) contacts are provided by Gly71 and Thr74.

It belongs to the fluoride channel Fluc/FEX (TC 1.A.43) family.

It localises to the cell membrane. The catalysed reaction is fluoride(in) = fluoride(out). Its activity is regulated as follows. Na(+) is not transported, but it plays an essential structural role and its presence is essential for fluoride channel function. Functionally, fluoride-specific ion channel. Important for reducing fluoride concentration in the cell, thus reducing its toxicity. This is Fluoride-specific ion channel FluC 2 from Carboxydothermus hydrogenoformans (strain ATCC BAA-161 / DSM 6008 / Z-2901).